Here is a 511-residue protein sequence, read N- to C-terminus: Tyrosine--tRNA ligase, chloroplastic/mitochondrial (511 aa).

Position 118 (tyrosine 118) interacts with L-tyrosine. Aspartate 122 is a binding site for ATP. A 'HIGH' region motif is present at residues 123 to 132 (PTAESLHLGN). Residues aspartate 162, tyrosine 256, glutamine 260, aspartate 263, and glutamine 282 each coordinate L-tyrosine. The 'KMSKS' region signature appears at 318-322 (KFGKS). Lysine 321 provides a ligand contact to ATP. The region spanning 444–510 (LSIVDLSVSA…GKKNKVVVRI (67 aa)) is the S4 RNA-binding domain.

The protein belongs to the class-I aminoacyl-tRNA synthetase family.

The protein localises to the plastid. It is found in the chloroplast. It localises to the mitochondrion. It carries out the reaction tRNA(Tyr) + L-tyrosine + ATP = L-tyrosyl-tRNA(Tyr) + AMP + diphosphate + H(+). Functionally, catalyzes the attachment of tyrosine to tRNA(Tyr) in a two-step reaction: tyrosine is first activated by ATP to form Tyr-AMP and then transferred to the acceptor end of tRNA(Tyr). This chain is Tyrosine--tRNA ligase, chloroplastic/mitochondrial, found in Arabidopsis thaliana (Mouse-ear cress).